We begin with the raw amino-acid sequence, 187 residues long: MNETQIQRETRQVVEDVLEKTNLKQGALFVLGLSSSEVLGGQIGKESSQEIGELIVETILGILGSRGIHLAVQGCEHVNRALVVERQVAEQFGLEIVSVHPTLHAGGSGQLAAFKFMQDPVEVEFIKAHAGLDIGDTAIGMHVKHVQVPIRPILREIGHAHVTALASRPKLIGGARAHYPQDAIRKS.

This sequence belongs to the UPF0340 family.

The protein is UPF0340 protein SPT_0687 of Streptococcus pneumoniae (strain Taiwan19F-14).